A 340-amino-acid polypeptide reads, in one-letter code: Anthranilate phosphoribosyltransferase (340 aa).

Residues Gly-81, 84–85, Thr-89, 91–94, 109–117, and Ser-121 each bind 5-phospho-alpha-D-ribose 1-diphosphate; these read GD, NIST, and KHGNRGATS. Residue Gly-81 participates in anthranilate binding. Position 93 (Ser-93) interacts with Mg(2+). Residue Asn-112 participates in anthranilate binding. Residue Arg-167 coordinates anthranilate. Positions 225 and 226 each coordinate Mg(2+).

It belongs to the anthranilate phosphoribosyltransferase family. Homodimer. Mg(2+) serves as cofactor.

It carries out the reaction N-(5-phospho-beta-D-ribosyl)anthranilate + diphosphate = 5-phospho-alpha-D-ribose 1-diphosphate + anthranilate. It participates in amino-acid biosynthesis; L-tryptophan biosynthesis; L-tryptophan from chorismate: step 2/5. Its function is as follows. Catalyzes the transfer of the phosphoribosyl group of 5-phosphorylribose-1-pyrophosphate (PRPP) to anthranilate to yield N-(5'-phosphoribosyl)-anthranilate (PRA). The chain is Anthranilate phosphoribosyltransferase from Methanocorpusculum labreanum (strain ATCC 43576 / DSM 4855 / Z).